Reading from the N-terminus, the 423-residue chain is MFS-type transporter phiL (423 aa).

A run of 3 helical transmembrane segments spans residues 25–45 (IFCFVTYIAANVGLALSNSFI), 82–102 (IGLASVGPIIGPSLGPVLGGV), and 111–131 (YIFVILAAAALIFLFLLIIFF). N-linked (GlcNAc...) asparagine glycans are attached at residues Asn141 and Asn151. The disordered stretch occupies residues 166–185 (DHASGRNLPNAGSKKSNPRN). 4 helical membrane passes run 203-223 (VIIFNGLSYAIYYAITSSLSY), 238-258 (LSYIPIGVGTIIAALGNGFVV), 298-318 (IAVPAVVVACISMLGYAWTMS), and 321-341 (LPPIIPLLCLFVFGWGGTAAY). N-linked (GlcNAc...) asparagine glycosylation is present at Asn352. Helical transmembrane passes span 369 to 389 (LLGAGGAAVIMPLINVLGMGW) and 390 to 410 (TFTAIAGLWVLLSPLVLFLLF).

Belongs to the major facilitator superfamily. CAR1 family.

The protein resides in the membrane. In terms of biological role, MFS-type transporter; part of the gene cluster that mediates the biosynthesis of the antihypercholesterolemic agents phomoidrides which are dimeric anhydrides. The polypeptide is MFS-type transporter phiL (Fungal sp. (strain ATCC 74256)).